The sequence spans 364 residues: Probable dual-specificity RNA methyltransferase RlmN (364 aa).

The active-site Proton acceptor is glutamate 109. In terms of domain architecture, Radical SAM core spans 123–351 (PKARLTVCVS…VSVRYSRGLE (229 aa)). A disulfide bond links cysteine 130 and cysteine 356. 3 residues coordinate [4Fe-4S] cluster: cysteine 137, cysteine 141, and cysteine 144. S-adenosyl-L-methionine contacts are provided by residues 184 to 185 (GE), serine 214, 237 to 239 (SLH), and asparagine 313. Catalysis depends on cysteine 356, which acts as the S-methylcysteine intermediate.

The protein belongs to the radical SAM superfamily. RlmN family. [4Fe-4S] cluster is required as a cofactor.

It localises to the cytoplasm. The catalysed reaction is adenosine(2503) in 23S rRNA + 2 reduced [2Fe-2S]-[ferredoxin] + 2 S-adenosyl-L-methionine = 2-methyladenosine(2503) in 23S rRNA + 5'-deoxyadenosine + L-methionine + 2 oxidized [2Fe-2S]-[ferredoxin] + S-adenosyl-L-homocysteine. It carries out the reaction adenosine(37) in tRNA + 2 reduced [2Fe-2S]-[ferredoxin] + 2 S-adenosyl-L-methionine = 2-methyladenosine(37) in tRNA + 5'-deoxyadenosine + L-methionine + 2 oxidized [2Fe-2S]-[ferredoxin] + S-adenosyl-L-homocysteine. Specifically methylates position 2 of adenine 2503 in 23S rRNA and position 2 of adenine 37 in tRNAs. This is Probable dual-specificity RNA methyltransferase RlmN from Nostoc punctiforme (strain ATCC 29133 / PCC 73102).